The sequence spans 193 residues: DNA dC-&gt;dU-editing enzyme APOBEC-3H (193 aa).

One can recognise a CMP/dCMP-type deaminase domain in the interval 24–126; that stretch reads YRRKTYLCYQ…WKYQQGLRHL (103 aa). A Zn(2+)-binding site is contributed by histidine 54. Glutamate 56 (proton donor) is an active-site residue. Residues cysteine 85 and cysteine 88 each coordinate Zn(2+).

It belongs to the cytidine and deoxycytidylate deaminase family. In terms of assembly, homodimer. The cofactor is Zn(2+). As to expression, expressed in peripheral blood mononuclear cells.

The protein localises to the cytoplasm. The catalysed reaction is a 2'-deoxycytidine in single-stranded DNA + H2O + H(+) = a 2'-deoxyuridine in single-stranded DNA + NH4(+). In terms of biological role, DNA deaminase (cytidine deaminase) which acts as an inhibitor of retrovirus replication and retrotransposon mobility via deaminase-dependent and -independent mechanisms. Selectively targets single-stranded DNA and does not deaminate double-stranded DNA or single- or double-stranded RNA. Exhibits single-stranded DNA deaminase activity (in vitro). Incorporates into the released virions of the virion infectivity factor (vif)-deficient feline immunodeficiency virus (FIV) and suppresses FIV infectivity, probably in a deaminase-dependent manner (in vitro). Induces G-to-A hypermutations in vif-deficient FIV (in vitro). The APOBEC3H/APOBEC3Z3 haplotype 5 exhibits antiviral activity against vif-proficient FIV, strains Petaluma, C36 and Shizuoka (in vitro). Does not exhibit inhibitory activity against feline leukemia virus (FeLV), feline endogenous retrovirus (RD-114 virus) or a long interspersed nuclear element-1 (LINE-1) retrotransposon (in vitro). This is DNA dC-&gt;dU-editing enzyme APOBEC-3H from Felis catus (Cat).